A 279-amino-acid chain; its full sequence is Tryptophan synthase alpha chain (279 aa).

Active-site proton acceptor residues include E50 and D61.

The protein belongs to the TrpA family. Tetramer of two alpha and two beta chains.

The catalysed reaction is (1S,2R)-1-C-(indol-3-yl)glycerol 3-phosphate + L-serine = D-glyceraldehyde 3-phosphate + L-tryptophan + H2O. Its pathway is amino-acid biosynthesis; L-tryptophan biosynthesis; L-tryptophan from chorismate: step 5/5. Its function is as follows. The alpha subunit is responsible for the aldol cleavage of indoleglycerol phosphate to indole and glyceraldehyde 3-phosphate. This is Tryptophan synthase alpha chain from Sinorhizobium fredii (strain NBRC 101917 / NGR234).